Here is a 451-residue protein sequence, read N- to C-terminus: Trigger factor (451 aa).

A PPIase FKBP-type domain is found at 165–250 (DDKLTIDFEG…LHQIQAREML (86 aa)).

The protein belongs to the FKBP-type PPIase family. Tig subfamily.

Its subcellular location is the cytoplasm. It carries out the reaction [protein]-peptidylproline (omega=180) = [protein]-peptidylproline (omega=0). Involved in protein export. Acts as a chaperone by maintaining the newly synthesized protein in an open conformation. Functions as a peptidyl-prolyl cis-trans isomerase. This Helicobacter pylori (strain ATCC 700392 / 26695) (Campylobacter pylori) protein is Trigger factor (tig).